The chain runs to 65 residues: Large ribosomal subunit protein bL32 (65 aa).

Residues 1 to 19 (MAVQKSRKTPSKRGMRRSH) show a composition bias toward basic residues. A disordered region spans residues 1-32 (MAVQKSRKTPSKRGMRRSHNALTNPTLSEDQE).

The protein belongs to the bacterial ribosomal protein bL32 family.

In Ruthia magnifica subsp. Calyptogena magnifica, this protein is Large ribosomal subunit protein bL32.